A 1118-amino-acid chain; its full sequence is DNA mismatch repair protein MSH1, mitochondrial (1118 aa).

Position 768–775 (768–775) interacts with ATP; that stretch reads GPNGGGKS.

Belongs to the DNA mismatch repair MutS family.

The protein resides in the mitochondrion. Its subcellular location is the plastid. It localises to the chloroplast. In terms of biological role, DNA mismatch repair protein specifically involved in maintenance of mitochondrial genome configuration by controlling specific rearranged portion. Functions by suppressing asymmetric recombination at some repeat pairs. The polypeptide is DNA mismatch repair protein MSH1, mitochondrial (MSH1) (Arabidopsis thaliana (Mouse-ear cress)).